The following is a 137-amino-acid chain: Ribosomal RNA small subunit methyltransferase G (137 aa).

S-adenosyl-L-methionine-binding positions include glycine 75, phenylalanine 80, and 126–127 (AE).

It belongs to the methyltransferase superfamily. RNA methyltransferase RsmG family.

Its subcellular location is the cytoplasm. Functionally, specifically methylates the N7 position of a guanine in 16S rRNA. This is Ribosomal RNA small subunit methyltransferase G from Mycoplasma mycoides subsp. mycoides SC (strain CCUG 32753 / NCTC 10114 / PG1).